A 482-amino-acid polypeptide reads, in one-letter code: Peptide chain release factor PrfB2, chloroplastic (482 aa).

A chloroplast-targeting transit peptide spans 1–21; the sequence is MLSLIIRRSRSRFIIHGIKIS.

This sequence belongs to the prokaryotic/mitochondrial release factor family.

It localises to the plastid. The protein resides in the chloroplast stroma. Functionally, directs the termination of translation in response to the peptide chain termination codon UGA. Required for the proper translation, stability and normal processing of UGA-containing polycistronic transcripts in chloroplasts. This Arabidopsis thaliana (Mouse-ear cress) protein is Peptide chain release factor PrfB2, chloroplastic.